A 299-amino-acid polypeptide reads, in one-letter code: Acetylglutamate kinase (299 aa).

Substrate-binding positions include 72–73, Arg94, and Asn196; that span reads GG.

The protein belongs to the acetylglutamate kinase family. ArgB subfamily.

The protein resides in the cytoplasm. The enzyme catalyses N-acetyl-L-glutamate + ATP = N-acetyl-L-glutamyl 5-phosphate + ADP. Its pathway is amino-acid biosynthesis; L-arginine biosynthesis; N(2)-acetyl-L-ornithine from L-glutamate: step 2/4. Functionally, catalyzes the ATP-dependent phosphorylation of N-acetyl-L-glutamate. This Burkholderia thailandensis (strain ATCC 700388 / DSM 13276 / CCUG 48851 / CIP 106301 / E264) protein is Acetylglutamate kinase.